The sequence spans 97 residues: Defensin-like protein 196 (97 aa).

A signal peptide spans 1–28; sequence MAKMSALSIFAIFIILVLVIFEIPEIEA. 4 cysteine pairs are disulfide-bonded: C33–C85, C46–C70, C55–C80, and C59–C82.

Belongs to the DEFL family. Protease inhibitor I18 (RTI/MTI-2) subfamily.

The protein localises to the secreted. The sequence is that of Defensin-like protein 196 (ATTI4) from Arabidopsis thaliana (Mouse-ear cress).